Consider the following 482-residue polypeptide: Nicotine dehydrogenase (482 aa).

Residues 1-38 (MSDKTKTNEGFSRRSFIGSAAVVTAGVAGLGAIDAASA) constitute a signal peptide (tat-type signal). 7 residues coordinate FAD: A64, E83, A84, R85, R91, W108, and V279. T381 contacts (S)-nicotine. FAD-binding residues include A453, N462, and I463.

The protein belongs to the flavin monoamine oxidase family. In terms of assembly, monomer in solution. Homodimer in solution. Forms homodimers in the crystal. The cofactor is FAD. Post-translationally, predicted to be exported by the Tat system. The position of the signal peptide cleavage has not been experimentally proven.

It is found in the periplasm. The enzyme catalyses (S)-nicotine + 2 Fe(III)-[cytochrome c] = N-methylmyosmine + 2 Fe(II)-[cytochrome c] + 2 H(+). The protein operates within alkaloid degradation; nicotine degradation. With respect to regulation, the catalytic rate is not significantly affected by pH. Functionally, involved in nicotine degradation. Catalyzes the conversion of nicotine to N-methylmyosmine. N-methylmyosmine undergoes spontaneous hydrolysis to form pseudooxynicotine (PN). S-nicotine is the optimal substrate. Has lower activity with some nicotine analogs, but shows no activity towards neurotransmitters, including serotonin, dopamine, and norepinephrine, nicotine metabolites and common neuroactive drugs. The enzyme is stereospecific with poor activity with (R)-nicotine as the substrate. The c-type cytochrome protein CycN is the physiological electron acceptor. O(2) is a poor electron acceptor. This is Nicotine dehydrogenase from Pseudomonas putida (strain DSM 28022 / S16).